Reading from the N-terminus, the 276-residue chain is Phosphatidylcholine synthase (276 aa).

The Cytoplasmic portion of the chain corresponds to 1 to 30; the sequence is MGGQKEMADSVKTKLTGKLKAKKVTAPQAK. A helical transmembrane segment spans residues 31–51; it reads AFSVHLLTASGSFLAFLSVVA. At 52 to 57 the chain is on the periplasmic side; the sequence is ASDGRY. Residues 58–78 form a helical membrane-spanning segment; sequence TAMWWWLGLALFVDGIDGPIA. Residues 79-91 lie on the Cytoplasmic side of the membrane; sequence RKLEVKYVLPNWS. A helical membrane pass occupies residues 92 to 112; that stretch reads GELLDSIIDYVTYVLIPAFAL. Residues 113 to 115 lie on the Periplasmic side of the membrane; that stretch reads YQS. Residues 116–136 traverse the membrane as a helical segment; that stretch reads GFMGTNLSFISGAIIVVSSAI. Over 137–146 the chain is Cytoplasmic; sequence YYADTGMKTK. Residues 147–167 traverse the membrane as a helical segment; the sequence is ENFFKGFPVVWNMVVFTLFIV. The Periplasmic portion of the chain corresponds to 168-171; that stretch reads RPGE. The chain crosses the membrane as a helical span at residues 172–192; it reads WVAFGTVVASAILSFLPINFL. Residues 193–202 lie on the Cytoplasmic side of the membrane; the sequence is HPVRVVRLRP. Residues 203 to 223 traverse the membrane as a helical segment; it reads LNLTIFLLWCAFGVIALYYML. The Periplasmic segment spans residues 224–230; it reads DAPLWVR. Residues 231–251 traverse the membrane as a helical segment; it reads IGISVTGLYIYFIGAIMQLFP. The Cytoplasmic portion of the chain corresponds to 252–276; that stretch reads SLGREAALAKARKLVEKQQKSGEAP.

This sequence belongs to the CDP-alcohol phosphatidyltransferase class-I family. Mn(2+) serves as cofactor.

The protein resides in the cell inner membrane. The enzyme catalyses a CDP-1,2-diacyl-sn-glycerol + choline = a 1,2-diacyl-sn-glycero-3-phosphocholine + CMP + H(+). Condenses choline with CDP-diglyceride to produce phosphatidylcholine and CMP. In Brucella melitensis biotype 1 (strain ATCC 23456 / CCUG 17765 / NCTC 10094 / 16M), this protein is Phosphatidylcholine synthase.